We begin with the raw amino-acid sequence, 293 residues long: Probable 2-(5''-triphosphoribosyl)-3'-dephosphocoenzyme-A synthase (293 aa).

Belongs to the CitG/MdcB family.

It catalyses the reaction 3'-dephospho-CoA + ATP = 2'-(5''-triphospho-alpha-D-ribosyl)-3'-dephospho-CoA + adenine. Its function is as follows. Involved in the formation of 2-(5''-phosphoribosyl)-3'-dephosphocoenzyme-A, the prosthetic group of the acyl-carrier protein of the malonate decarboxylase. The chain is Probable 2-(5''-triphosphoribosyl)-3'-dephosphocoenzyme-A synthase from Pseudomonas aeruginosa (strain UCBPP-PA14).